A 328-amino-acid polypeptide reads, in one-letter code: Pyruvate dehydrogenase E1 component subunit beta (328 aa).

Glu60 is a binding site for thiamine diphosphate. The K(+) site is built by Ile113, Ile162, and Asn166.

As to quaternary structure, heterodimer of an alpha and a beta chain. Thiamine diphosphate is required as a cofactor.

It localises to the plastid. It is found in the chloroplast. The catalysed reaction is N(6)-[(R)-lipoyl]-L-lysyl-[protein] + pyruvate + H(+) = N(6)-[(R)-S(8)-acetyldihydrolipoyl]-L-lysyl-[protein] + CO2. The pyruvate dehydrogenase complex catalyzes the overall conversion of pyruvate to acetyl-CoA and CO(2). It contains multiple copies of three enzymatic components: pyruvate dehydrogenase (E1), dihydrolipoamide acetyltransferase (E2) and lipoamide dehydrogenase (E3). This chain is Pyruvate dehydrogenase E1 component subunit beta (pdhB), found in Staurastrum punctulatum (Green alga).